A 362-amino-acid polypeptide reads, in one-letter code: Manganese peroxidase 3 (362 aa).

An N-terminal signal peptide occupies residues 1–18; that stretch reads MAFKQLLTAISIVSVANA. A propeptide spanning residues 19–23 is cleaved from the precursor; the sequence is ALTRR. 4 cysteine pairs are disulfide-bonded: Cys26–Cys39, Cys38–Cys309, Cys58–Cys144, and Cys273–Cys338. Residues Glu60 and Glu64 each coordinate Mn(2+). His71 functions as the Proton acceptor in the catalytic mechanism. The Ca(2+) site is built by Asp72, Gly90, Asp92, and Ser94. The N-linked (GlcNAc...) asparagine glycan is linked to Asn126. His200 contributes to the heme b binding site. Thr201 contributes to the Ca(2+) binding site. Asp206 is a binding site for Mn(2+). Ca(2+) contacts are provided by Asp218, Thr220, Ile223, and Asp225. The interval 341–362 is disordered; the sequence is TPFPSLSADPGPATSVAPVPPS.

This sequence belongs to the peroxidase family. Ligninase subfamily. Requires heme b as cofactor. Ca(2+) is required as a cofactor.

It localises to the secreted. The enzyme catalyses 2 Mn(2+) + H2O2 + 2 H(+) = 2 Mn(3+) + 2 H2O. Catalyzes the oxidation of Mn(2+) to Mn(3+). The latter, acting as a diffusible redox mediator, is capable of oxidizing a variety of lignin compounds. This isozyme is also able to oxidize phenols and amines in the absence of Mn(2+), similar to versatile peroxidases. The polypeptide is Manganese peroxidase 3 (mnp3) (Phlebia radiata (White-rot fungus)).